The sequence spans 597 residues: Polyphenol oxidase latent form, chloroplastic (597 aa).

The N-terminal 49 residues, Met1–Ser49, are a transit peptide targeting the chloroplast. The interval Ser49 to Arg70 is disordered. The N-terminal 52 residues, Cys50 to Ala101, are a transit peptide targeting the thylakoid. Low complexity predominate over residues Asn54–Glu63. Disulfide bonds link Cys112–Cys128 and Cys127–Cys189. Cu cation is bound by residues His188, His209, His218, His341, His345, and His375. Positions Cys192–His209 form a cross-link, 2'-(S-cysteinyl)-histidine (Cys-His).

This sequence belongs to the tyrosinase family. Monomer. Cu(2+) serves as cofactor. As to expression, expressed in immature-green fruit.

Its subcellular location is the plastid. It is found in the chloroplast thylakoid lumen. It carries out the reaction 2 catechol + O2 = 2 1,2-benzoquinone + 2 H2O. Activated in the presence of substrate at low pH. Specific activity fluctuates during fruit ripening, starting at immature-green stage, reaching a peak at the breaker stage, followed by a sharp decrease until the half-ripe stage to remain stable during the following development stages. Triggered by CuSO(4) and by low concentrations of SDS. Repressed by several inhibitors including 4-hexylresorcinol, ascorbic acid, benzoic acid, kojic acid, glutathione (reduced form), L-cysteine and sodium metabisulfite. Inhibited by various salt such as FeSO(4), KCl, NaCl, CaCl(2), MnCl(2), NiCl(2) and AlCl(3). Spontaneously activated during storage at 4 degrees Celsius. Catalyzes the oxidation of mono- and o-diphenols to o-diquinones. Uses preferentially 4-methylcatechol and chlorogenic acid as substrates, followed by caffeic acid, pyrogallol, and catechol, but barely active toward dopamine and L-dopa. No activity detected with monophenols (e.g. phenol and tyramine). The sequence is that of Polyphenol oxidase latent form, chloroplastic from Prunus armeniaca (Apricot).